The chain runs to 575 residues: MNRRFPVWAPQAAQVTLVVGQGRAELPLTRDENGWWALQQPWDGGPDLVDYGYLVDGKGPFADPRSLRQPRGVHELGREFDPARYAWGDDGWRGRDLTGAVIYELHVGTFTPEGTLDSAIRRLDHLVRLGVDAVELLPVNAFNGTHGWGYDGVLWYAVHEPYGGPEAYQRFVDACHARGLAVVQDVVYNHLGPSGNHLPDFGPYLGSGAANTWGDALNLDGPLSDEVRRYIIDNAVYWLRDMHADGLRLDAVHALRDARALHLLEELAARVDELAGELGRPLTLIAESDLNDPKLIRSRAAHGYGLDAQWDDDVHHAVHANVTGETVGYYADFGGLGALVKVFQRGWFHDGTWSSFRERHHGRPLDPDIPFRRLVAFAQDHDQVGNRAVGDRMSAQVGEGSLAAAAALVLLGPFTPMLFMGEEWGARTPWQFFTSHPEPELGEATARGRIAEFARMGWDPAVVPDPQDPATFARSHLDWSEPEREPHAGLLAFYTDLIALRRELPVDAPAREVDADEARGVFAFSRGPLRVTVALRPGPVGVPEHGGLVLAYGEVRAGAAGLHLDGPGAAIVRLE.

248–253 (RLDAVH) is a substrate binding site. D250 serves as the catalytic Nucleophile. The active-site Proton donor is E287. Substrate is bound by residues 312 to 316 (DDVHH) and 381 to 386 (HDQVGN).

This sequence belongs to the glycosyl hydrolase 13 family.

The protein resides in the cytoplasm. It carries out the reaction hydrolysis of (1-&gt;4)-alpha-D-glucosidic linkage in 4-alpha-D-[(1-&gt;4)-alpha-D-glucanosyl]n trehalose to yield trehalose and (1-&gt;4)-alpha-D-glucan.. The protein operates within glycan biosynthesis; trehalose biosynthesis. The sequence is that of Malto-oligosyltrehalose trehalohydrolase (treZ) from Arthrobacter ramosus.